We begin with the raw amino-acid sequence, 40 residues long: Proteinase inhibitor IIB (40 aa).

3 cysteine pairs are disulfide-bonded: Cys-2–Cys-16, Cys-6–Cys-28, and Cys-12–Cys-38.

This sequence belongs to the protease inhibitor I20 (potato type II proteinase inhibitor) family.

It localises to the secreted. In terms of biological role, inhibits chymotrypsin and subtilisin strongly. The sequence is that of Proteinase inhibitor IIB from Solanum tuberosum (Potato).